Consider the following 443-residue polypeptide: MTRKLLILSGCLILALNSCKSDMETTPASSVDHTTTQLNGTTIHKLLINGAYTYVNEVNGEYFYADDITITAEQFNQLKRMANPDISTVERSTIVSSFIKTWPNATVYYTLPSQGSLSTQAYNTFLTNINKAFDMISSKTSVKFVQRTNQTEYITFTYSTGNSSPLGWVKNRVNGIKIYNTTYPAIIAHEIMHSMGIMHEQCRPDRDQYIIVDTNRAQDGTRHNFNLYNDYAGHGEFDFGSVMMYKSTDFAIDPNLPVMTKLDGSTFGKQRDGLSAGDYAGINHLYGPVNSTSATNGTYTLTTSLAGDKNIDITGSSTADGTDVILYSATTGNNQKFIFRKSEHGYFTIKSILDSTKVLTVRNNGTANGTAVELRTNADTDAQKWLLFNLGNEGFGFAPKNAPSLRLEVKDGLTTNLTPIVIGSTDQTLQPYTKQRFTLTKVN.

A signal peptide spans methionine 1–alanine 15. Positions leucine 16 to arginine 91 are cleaved as a propeptide — activation peptide. A Peptidase M12A domain is found at serine 92 to valine 289. Position 189 (histidine 189) interacts with Zn(2+). Residue glutamate 190 is part of the active site. Zn(2+)-binding residues include histidine 193 and histidine 199. The 144-residue stretch at glycine 297 to threonine 440 folds into the Ricin B-type lectin domain. O-linked (Man...) serine glycosylation is present at serine 355.

Zn(2+) is required as a cofactor. O-linked glycan consists of the Man, GlcNAc, GlcU, Glc, GlcU, Rha, Man heptasaccharide.

The catalysed reaction is Hydrolyzes polypeptides on the amino-side of Asp in -Xaa-|-Asp-. Acts very slowly on -Xaa-|-Glu.. Zinc metallendopeptidase that cleaves preferentially on N-terminal side of aspartate-containing substrates. This Elizabethkingia meningoseptica (Chryseobacterium meningosepticum) protein is Flavastacin.